We begin with the raw amino-acid sequence, 274 residues long: Pantothenate synthetase (274 aa).

An ATP-binding site is contributed by 27-34 (MGALHKGH). Catalysis depends on His34, which acts as the Proton donor. Gln58 is a binding site for (R)-pantoate. Gln58 serves as a coordination point for beta-alanine. 145–148 (GQKD) lines the ATP pocket. Gln151 serves as a coordination point for (R)-pantoate. 182–185 (LSSR) contacts ATP.

Belongs to the pantothenate synthetase family. Homodimer.

It is found in the cytoplasm. It catalyses the reaction (R)-pantoate + beta-alanine + ATP = (R)-pantothenate + AMP + diphosphate + H(+). Its pathway is cofactor biosynthesis; (R)-pantothenate biosynthesis; (R)-pantothenate from (R)-pantoate and beta-alanine: step 1/1. Its function is as follows. Catalyzes the condensation of pantoate with beta-alanine in an ATP-dependent reaction via a pantoyl-adenylate intermediate. The sequence is that of Pantothenate synthetase from Wolinella succinogenes (strain ATCC 29543 / DSM 1740 / CCUG 13145 / JCM 31913 / LMG 7466 / NCTC 11488 / FDC 602W) (Vibrio succinogenes).